A 132-amino-acid polypeptide reads, in one-letter code: Ribosome-binding factor A (132 aa).

This sequence belongs to the RbfA family. Monomer. Binds 30S ribosomal subunits, but not 50S ribosomal subunits or 70S ribosomes.

It localises to the cytoplasm. Its function is as follows. One of several proteins that assist in the late maturation steps of the functional core of the 30S ribosomal subunit. Associates with free 30S ribosomal subunits (but not with 30S subunits that are part of 70S ribosomes or polysomes). Required for efficient processing of 16S rRNA. May interact with the 5'-terminal helix region of 16S rRNA. The sequence is that of Ribosome-binding factor A from Bordetella avium (strain 197N).